The chain runs to 262 residues: (2Z,6E)-farnesyl diphosphate synthase (262 aa).

Asp40 is an active-site residue. Mg(2+) is bound at residue Asp40. Residues 41 to 44 (GNRR), Trp45, and 86 to 88 (STE) contribute to the substrate site. Residue Asn89 is the Proton acceptor of the active site. Residues Arg92, Arg211, and 217–219 (RLS) contribute to the substrate site. Glu230 lines the Mg(2+) pocket.

Belongs to the UPP synthase family. Z-FPP synthase subfamily. As to quaternary structure, homodimer. Requires Mg(2+) as cofactor.

The protein localises to the cytoplasm. The protein resides in the cell membrane. The enzyme catalyses isopentenyl diphosphate + (2E)-geranyl diphosphate = (2Z,6E)-farnesyl diphosphate + diphosphate. Functionally, catalyzes the condensation of only one isopentenyl pyrophosphate (IPP) unit in the cis configuration to E-geranyl diphosphate (E-GPP) generating the 15 carbon product (2Z,6E)-farnesyl diphosphate (Z-FPP or EZ-FPP). Z-FPP is the precursor of decaprenyl diphosphate, which has a central role in the biosynthesis of the mycobacterial cell wall. This is (2Z,6E)-farnesyl diphosphate synthase from Mycobacterium tuberculosis (strain CDC 1551 / Oshkosh).